Here is a 66-residue protein sequence, read N- to C-terminus: Probable Sec-independent protein translocase protein TatE (66 aa).

A helical transmembrane segment spans residues 1–21; that stretch reads MEGISITKLLVIAVLIVLLFG. The disordered stretch occupies residues 46-66; it reads ETPAAKKSDGAEAAPRVENKE.

The protein belongs to the TatA/E family. TatE subfamily.

It is found in the cell inner membrane. In terms of biological role, part of the twin-arginine translocation (Tat) system that transports large folded proteins containing a characteristic twin-arginine motif in their signal peptide across membranes. TatE shares overlapping functions with TatA. The chain is Probable Sec-independent protein translocase protein TatE from Edwardsiella piscicida.